We begin with the raw amino-acid sequence, 391 residues long: uncharacterized protein (391 aa).

A compositionally biased stretch (low complexity) spans 118 to 149; that stretch reads SINSLPPTTTTTTTTTTTTTIPNNNNNITLSP. 4 disordered regions span residues 118–162, 184–258, 272–327, and 337–356; these read SINS…HQHP, QTNV…TPRN, NNNL…NNLN, and LNLNNNNNNNNNNNNNNNNN. Residues 150 to 162 are compositionally biased toward basic residues; that stretch reads QHHHGQQQHHQHP. Residues 186–211 are compositionally biased toward low complexity; it reads NVNNNNNNNNNNNNNNNSNNNNNNNN. Positions 212 to 223 are enriched in polar residues; the sequence is DFSTPNSFSVPT. Residues 244 to 256 are compositionally biased toward low complexity; the sequence is NTPNNSTSNPTTP.

This is an uncharacterized protein from Dictyostelium discoideum (Social amoeba).